We begin with the raw amino-acid sequence, 842 residues long: Protein translocase subunit SecA (842 aa).

ATP is bound by residues Gln85, 103–107 (GEGKT), and Asp493. 4 residues coordinate Zn(2+): Cys825, Cys827, Cys836, and His837.

This sequence belongs to the SecA family. In terms of assembly, monomer and homodimer. Part of the essential Sec protein translocation apparatus which comprises SecA, SecYEG and auxiliary proteins SecDF. Other proteins may also be involved. Requires Zn(2+) as cofactor.

It is found in the cell membrane. The protein resides in the cytoplasm. It catalyses the reaction ATP + H2O + cellular proteinSide 1 = ADP + phosphate + cellular proteinSide 2.. Its function is as follows. Part of the Sec protein translocase complex. Interacts with the SecYEG preprotein conducting channel. Has a central role in coupling the hydrolysis of ATP to the transfer of proteins into and across the cell membrane, serving as an ATP-driven molecular motor driving the stepwise translocation of polypeptide chains across the membrane. This Streptococcus uberis (strain ATCC BAA-854 / 0140J) protein is Protein translocase subunit SecA.